Reading from the N-terminus, the 123-residue chain is Probable histone H2B 4 (123 aa).

Residues 1-30 form a disordered region; sequence MPPKPSAKGAKKAAKTVVAKPKDGKKRRHA. Ser110 carries an O-linked (GlcNAc) serine glycan. Residue Lys118 forms a Glycyl lysine isopeptide (Lys-Gly) (interchain with G-Cter in ubiquitin) linkage.

The protein belongs to the histone H2B family. In terms of assembly, the nucleosome is a histone octamer containing two molecules each of H2A, H2B, H3 and H4 assembled in one H3-H4 heterotetramer and two H2A-H2B heterodimers. The octamer wraps approximately 147 bp of DNA. In terms of processing, monoubiquitination of Lys-118 gives a specific tag for epigenetic transcriptional activation and is also prerequisite for histone H3 'Lys-4' and 'Lys-79' methylation. GlcNAcylation at Ser-110 promotes monoubiquitination of Lys-118. It fluctuates in response to extracellular glucose, and associates with transcribed genes.

The protein localises to the nucleus. It is found in the chromosome. Its function is as follows. Core component of nucleosome. Nucleosomes wrap and compact DNA into chromatin, limiting DNA accessibility to the cellular machineries which require DNA as a template. Histones thereby play a central role in transcription regulation, DNA repair, DNA replication and chromosomal stability. DNA accessibility is regulated via a complex set of post-translational modifications of histones, also called histone code, and nucleosome remodeling. The protein is Probable histone H2B 4 (his-48) of Caenorhabditis elegans.